The sequence spans 540 residues: Ribonuclease Y (540 aa).

A helical transmembrane segment spans residues 4-24 (TILVPVAVAIVSVLVGGCAGY). The KH domain maps to 230–293 (TVSVVNLPND…EIAKRALERL (64 aa)). Residues 356–449 (VLSHSIEVGK…VVAADTISSA (94 aa)) form the HD domain.

The protein belongs to the RNase Y family.

The protein localises to the cell membrane. Functionally, endoribonuclease that initiates mRNA decay. The polypeptide is Ribonuclease Y (Lactobacillus gasseri (strain ATCC 33323 / DSM 20243 / BCRC 14619 / CIP 102991 / JCM 1131 / KCTC 3163 / NCIMB 11718 / NCTC 13722 / AM63)).